A 307-amino-acid chain; its full sequence is Ornithine carbamoyltransferase (307 aa).

Carbamoyl phosphate-binding positions include serine 53–threonine 56, glutamine 80, arginine 104, and histidine 131–glutamine 134. L-ornithine-binding positions include asparagine 162, aspartate 220, and serine 224–methionine 225. Residues cysteine 260 to leucine 261 and arginine 288 each bind carbamoyl phosphate.

It belongs to the aspartate/ornithine carbamoyltransferase superfamily. OTCase family.

The protein localises to the cytoplasm. It carries out the reaction carbamoyl phosphate + L-ornithine = L-citrulline + phosphate + H(+). It functions in the pathway amino-acid biosynthesis; L-arginine biosynthesis; L-arginine from L-ornithine and carbamoyl phosphate: step 1/3. Reversibly catalyzes the transfer of the carbamoyl group from carbamoyl phosphate (CP) to the N(epsilon) atom of ornithine (ORN) to produce L-citrulline. The protein is Ornithine carbamoyltransferase of Nitrosomonas eutropha (strain DSM 101675 / C91 / Nm57).